Here is a 241-residue protein sequence, read N- to C-terminus: Small ribosomal subunit protein uS3 (241 aa).

Residues 39–108 form the KH type-2 domain; that stretch reads IREGVLKLLK…NLKVEVKVIE (70 aa). Positions 215–241 are disordered; the sequence is SQRVSEKAPMNNDRRFNNKNNNRGGRK. The segment covering 232–241 has biased composition (low complexity); that stretch reads NKNNNRGGRK.

This sequence belongs to the universal ribosomal protein uS3 family. In terms of assembly, part of the 30S ribosomal subunit. Forms a tight complex with proteins S10 and S14.

Functionally, binds the lower part of the 30S subunit head. Binds mRNA in the 70S ribosome, positioning it for translation. This Mesoplasma florum (strain ATCC 33453 / NBRC 100688 / NCTC 11704 / L1) (Acholeplasma florum) protein is Small ribosomal subunit protein uS3.